The chain runs to 283 residues: Phosphate import ATP-binding protein PstB 1 (283 aa).

A compositionally biased stretch (acidic residues) spans 1–16; it reads MSSDDTTDPTADDESF. Residues 1 to 35 are disordered; that stretch reads MSSDDTTDPTADDESFTDSPVAGLEQSTTTRGSGR. One can recognise an ABC transporter domain in the interval 38–278; that stretch reads ISARNINVWY…PSSERVENYI (241 aa). 70 to 77 is a binding site for ATP; it reads GPSGCGKS.

It belongs to the ABC transporter superfamily. Phosphate importer (TC 3.A.1.7) family. The complex is composed of two ATP-binding proteins (PstB), two transmembrane proteins (PstC and PstA) and a solute-binding protein (PstS).

It is found in the cell membrane. It catalyses the reaction phosphate(out) + ATP + H2O = ADP + 2 phosphate(in) + H(+). Part of the ABC transporter complex PstSACB involved in phosphate import. Responsible for energy coupling to the transport system. The polypeptide is Phosphate import ATP-binding protein PstB 1 (Natronomonas pharaonis (strain ATCC 35678 / DSM 2160 / CIP 103997 / JCM 8858 / NBRC 14720 / NCIMB 2260 / Gabara) (Halobacterium pharaonis)).